We begin with the raw amino-acid sequence, 336 residues long: tRNA N6-adenosine threonylcarbamoyltransferase (336 aa).

The Fe cation site is built by histidine 111 and histidine 115. Residues 134 to 138 (LVSGG), aspartate 167, glycine 180, and asparagine 270 contribute to the substrate site. Residue aspartate 298 participates in Fe cation binding.

This sequence belongs to the KAE1 / TsaD family. Fe(2+) is required as a cofactor.

The protein localises to the cytoplasm. It carries out the reaction L-threonylcarbamoyladenylate + adenosine(37) in tRNA = N(6)-L-threonylcarbamoyladenosine(37) in tRNA + AMP + H(+). Its function is as follows. Required for the formation of a threonylcarbamoyl group on adenosine at position 37 (t(6)A37) in tRNAs that read codons beginning with adenine. Is involved in the transfer of the threonylcarbamoyl moiety of threonylcarbamoyl-AMP (TC-AMP) to the N6 group of A37, together with TsaE and TsaB. TsaD likely plays a direct catalytic role in this reaction. The sequence is that of tRNA N6-adenosine threonylcarbamoyltransferase from Acinetobacter baumannii (strain SDF).